Reading from the N-terminus, the 201-residue chain is Pyridoxine/pyridoxamine 5'-phosphate oxidase (201 aa).

FMN-binding positions include 45–50, 65–66, Arg71, Lys72, and Gln94; these read RMVLLK and YT. Lys50 contributes to the substrate binding site. The substrate site is built by Tyr112, Arg116, and Ser120. FMN-binding positions include 129-130 and Trp174; that span reads QS. 180–182 provides a ligand contact to substrate; that stretch reads RLH. Arg184 contacts FMN.

It belongs to the pyridoxamine 5'-phosphate oxidase family. As to quaternary structure, homodimer. The cofactor is FMN.

It catalyses the reaction pyridoxamine 5'-phosphate + O2 + H2O = pyridoxal 5'-phosphate + H2O2 + NH4(+). It carries out the reaction pyridoxine 5'-phosphate + O2 = pyridoxal 5'-phosphate + H2O2. The protein operates within cofactor metabolism; pyridoxal 5'-phosphate salvage; pyridoxal 5'-phosphate from pyridoxamine 5'-phosphate: step 1/1. It participates in cofactor metabolism; pyridoxal 5'-phosphate salvage; pyridoxal 5'-phosphate from pyridoxine 5'-phosphate: step 1/1. Its function is as follows. Catalyzes the oxidation of either pyridoxine 5'-phosphate (PNP) or pyridoxamine 5'-phosphate (PMP) into pyridoxal 5'-phosphate (PLP). The sequence is that of Pyridoxine/pyridoxamine 5'-phosphate oxidase from Rhodospirillum rubrum (strain ATCC 11170 / ATH 1.1.1 / DSM 467 / LMG 4362 / NCIMB 8255 / S1).